Here is a 294-residue protein sequence, read N- to C-terminus: N-acetylmuramic acid 6-phosphate etherase (294 aa).

In terms of domain architecture, SIS spans 54-217 (VIKSFEEEGR…STASMIGVGK (164 aa)). Glutamate 82 (proton donor) is an active-site residue. Glutamate 113 is an active-site residue.

Belongs to the GCKR-like family. MurNAc-6-P etherase subfamily. Homodimer.

The catalysed reaction is N-acetyl-D-muramate 6-phosphate + H2O = N-acetyl-D-glucosamine 6-phosphate + (R)-lactate. It functions in the pathway amino-sugar metabolism; N-acetylmuramate degradation. Its function is as follows. Specifically catalyzes the cleavage of the D-lactyl ether substituent of MurNAc 6-phosphate, producing GlcNAc 6-phosphate and D-lactate. The polypeptide is N-acetylmuramic acid 6-phosphate etherase (Bacillus cereus (strain ATCC 14579 / DSM 31 / CCUG 7414 / JCM 2152 / NBRC 15305 / NCIMB 9373 / NCTC 2599 / NRRL B-3711)).